Here is a 145-residue protein sequence, read N- to C-terminus: Peptide methionine sulfoxide reductase MsrB (145 aa).

The MsrB domain maps to 6-129; it reads KNERLKQLTD…NSAALRFIPV (124 aa). The active-site Nucleophile is the Cys118.

Belongs to the MsrB Met sulfoxide reductase family.

The catalysed reaction is L-methionyl-[protein] + [thioredoxin]-disulfide + H2O = L-methionyl-(R)-S-oxide-[protein] + [thioredoxin]-dithiol. This is Peptide methionine sulfoxide reductase MsrB from Listeria innocua serovar 6a (strain ATCC BAA-680 / CLIP 11262).